The chain runs to 204 residues: Holliday junction branch migration complex subunit RuvA (204 aa).

Residues 1–64 (MIGKLKGTIE…EDQIRLFGFM (64 aa)) are domain I. Residues 65-143 (AVLEREWFNL…AFAGEATNIG (79 aa)) form a domain II region. Positions 144–151 (FKQELGEG) are flexible linker. Residues 152-204 (VAPAPVSDAVSALTNLGYSRDQAANAIAAAMKVAGDEADSAKLIRLGLKELSR) form a domain III region.

The protein belongs to the RuvA family. As to quaternary structure, homotetramer. Forms an RuvA(8)-RuvB(12)-Holliday junction (HJ) complex. HJ DNA is sandwiched between 2 RuvA tetramers; dsDNA enters through RuvA and exits via RuvB. An RuvB hexamer assembles on each DNA strand where it exits the tetramer. Each RuvB hexamer is contacted by two RuvA subunits (via domain III) on 2 adjacent RuvB subunits; this complex drives branch migration. In the full resolvosome a probable DNA-RuvA(4)-RuvB(12)-RuvC(2) complex forms which resolves the HJ.

Its subcellular location is the cytoplasm. Its function is as follows. The RuvA-RuvB-RuvC complex processes Holliday junction (HJ) DNA during genetic recombination and DNA repair, while the RuvA-RuvB complex plays an important role in the rescue of blocked DNA replication forks via replication fork reversal (RFR). RuvA specifically binds to HJ cruciform DNA, conferring on it an open structure. The RuvB hexamer acts as an ATP-dependent pump, pulling dsDNA into and through the RuvAB complex. HJ branch migration allows RuvC to scan DNA until it finds its consensus sequence, where it cleaves and resolves the cruciform DNA. In Rhizobium rhizogenes (strain K84 / ATCC BAA-868) (Agrobacterium radiobacter), this protein is Holliday junction branch migration complex subunit RuvA.